We begin with the raw amino-acid sequence, 341 residues long: Phosphoribosylformylglycinamidine cyclo-ligase (341 aa).

The protein belongs to the AIR synthase family.

It localises to the cytoplasm. It carries out the reaction 2-formamido-N(1)-(5-O-phospho-beta-D-ribosyl)acetamidine + ATP = 5-amino-1-(5-phospho-beta-D-ribosyl)imidazole + ADP + phosphate + H(+). The protein operates within purine metabolism; IMP biosynthesis via de novo pathway; 5-amino-1-(5-phospho-D-ribosyl)imidazole from N(2)-formyl-N(1)-(5-phospho-D-ribosyl)glycinamide: step 2/2. This is Phosphoribosylformylglycinamidine cyclo-ligase from Xanthomonas euvesicatoria pv. vesicatoria (strain 85-10) (Xanthomonas campestris pv. vesicatoria).